A 29-amino-acid chain; its full sequence is Cytochrome b6-f complex subunit 8 (29 aa).

Residues 3 to 23 (IVGIAWAALMVVFTFSLSLVV) form a helical membrane-spanning segment.

Belongs to the PetN family. The 4 large subunits of the cytochrome b6-f complex are cytochrome b6, subunit IV (17 kDa polypeptide, PetD), cytochrome f and the Rieske protein, while the 4 small subunits are PetG, PetL, PetM and PetN. The complex functions as a dimer.

It is found in the plastid. The protein resides in the chloroplast thylakoid membrane. Its function is as follows. Component of the cytochrome b6-f complex, which mediates electron transfer between photosystem II (PSII) and photosystem I (PSI), cyclic electron flow around PSI, and state transitions. The polypeptide is Cytochrome b6-f complex subunit 8 (Cryptomeria japonica (Japanese cedar)).